A 210-amino-acid polypeptide reads, in one-letter code: Holliday junction resolvase RecU (210 aa).

The tract at residues 1–34 is disordered; the sequence is MAFHYPNGQPYSNHETKQPKKQGRHTSPTTLYGK. Mg(2+) contacts are provided by Thr90, Asp92, Glu105, and Gln124.

It belongs to the RecU family. The cofactor is Mg(2+).

It is found in the cytoplasm. It carries out the reaction Endonucleolytic cleavage at a junction such as a reciprocal single-stranded crossover between two homologous DNA duplexes (Holliday junction).. Its function is as follows. Endonuclease that resolves Holliday junction intermediates in genetic recombination. Cleaves mobile four-strand junctions by introducing symmetrical nicks in paired strands. Promotes annealing of linear ssDNA with homologous dsDNA. Required for DNA repair, homologous recombination and chromosome segregation. This Latilactobacillus sakei subsp. sakei (strain 23K) (Lactobacillus sakei subsp. sakei) protein is Holliday junction resolvase RecU.